A 403-amino-acid chain; its full sequence is Large ribosomal subunit protein uL3 (403 aa).

The interval 1–37 (MSHRKFSAPRHGSLGFLPRKRSSRHRGKVKSFPKDDP) is disordered. At S13 the chain carries Phosphoserine. The span at 18–31 (PRKRSSRHRGKVKS) shows a compositional bias: basic residues. K39 participates in a covalent cross-link: Glycyl lysine isopeptide (Lys-Gly) (interchain with G-Cter in SUMO2). At K136 the chain carries N6-acetyllysine. Residues K224 and K226 each participate in a glycyl lysine isopeptide (Lys-Gly) (interchain with G-Cter in SUMO2) cross-link. Residue H245 is modified to Tele-methylhistidine. An N6-acetyllysine; alternate mark is found at K286 and K294. Residue K286 forms a Glycyl lysine isopeptide (Lys-Gly) (interchain with G-Cter in SUMO2); alternate linkage. A Glycyl lysine isopeptide (Lys-Gly) (interchain with G-Cter in SUMO1); alternate cross-link involves residue K294. The residue at position 304 (S304) is a Phosphoserine. K366 carries the N6-acetyllysine; alternate modification. K366 participates in a covalent cross-link: Glycyl lysine isopeptide (Lys-Gly) (interchain with G-Cter in SUMO2); alternate. K373 carries the post-translational modification N6-acetyllysine. Residues K386, K393, and K399 each participate in a glycyl lysine isopeptide (Lys-Gly) (interchain with G-Cter in SUMO2) cross-link.

It belongs to the universal ribosomal protein uL3 family. As to quaternary structure, component of the large ribosomal subunit. Interacts with DHX33. Post-translationally, constitutively monomethylated at His-245 by METTL18. Methylation at His-245 regulates translation elongation by slowing ribosome traversal on tyrosine codons: slower elongation provides enough time for proper folding of synthesized proteins and prevents cellular aggregation of tyrosine-rich proteins It is not required for incorporation of RPL3 into ribosomes.

It is found in the nucleus. The protein resides in the nucleolus. Its subcellular location is the cytoplasm. Functionally, component of the large ribosomal subunit. The ribosome is a large ribonucleoprotein complex responsible for the synthesis of proteins in the cell. The polypeptide is Large ribosomal subunit protein uL3 (RPL3) (Macaca fascicularis (Crab-eating macaque)).